Here is a 301-residue protein sequence, read N- to C-terminus: Sulfate adenylyltransferase subunit 2 2 (301 aa).

It belongs to the PAPS reductase family. CysD subfamily. Heterodimer composed of CysD, the smaller subunit, and CysN.

The catalysed reaction is sulfate + ATP + H(+) = adenosine 5'-phosphosulfate + diphosphate. It functions in the pathway sulfur metabolism; hydrogen sulfide biosynthesis; sulfite from sulfate: step 1/3. Functionally, with CysN forms the ATP sulfurylase (ATPS) that catalyzes the adenylation of sulfate producing adenosine 5'-phosphosulfate (APS) and diphosphate, the first enzymatic step in sulfur assimilation pathway. APS synthesis involves the formation of a high-energy phosphoric-sulfuric acid anhydride bond driven by GTP hydrolysis by CysN coupled to ATP hydrolysis by CysD. This is Sulfate adenylyltransferase subunit 2 2 from Shewanella sediminis (strain HAW-EB3).